Here is a 399-residue protein sequence, read N- to C-terminus: uncharacterized protein (399 aa).

Residues 375 to 399 are disordered; sequence AAGGHRGSHGKSEQAATVRVVDDRR.

The protein belongs to the mycobacterial PPE family.

This is an uncharacterized protein from Mycobacterium tuberculosis (strain ATCC 25618 / H37Rv).